Here is a 122-residue protein sequence, read N- to C-terminus: Large ribosomal subunit protein bL12 (122 aa).

It belongs to the bacterial ribosomal protein bL12 family. As to quaternary structure, homodimer. Part of the ribosomal stalk of the 50S ribosomal subunit. Forms a multimeric L10(L12)X complex, where L10 forms an elongated spine to which 2 to 4 L12 dimers bind in a sequential fashion. Binds GTP-bound translation factors.

Its function is as follows. Forms part of the ribosomal stalk which helps the ribosome interact with GTP-bound translation factors. Is thus essential for accurate translation. The sequence is that of Large ribosomal subunit protein bL12 from Azotobacter vinelandii (strain DJ / ATCC BAA-1303).